The primary structure comprises 311 residues: MQDLAGKKIIIKSPAKINLHLEVIGKREDGFHELAMIMQNIDLFDYLEFQINNEGLIKLESDCTDLSLSSDNLIVKSANLLRKKLNIDCGANIFLRKNIPIGAGLAGGSSNAAATLIGLNKLWDLNVDQKTLFSLASTLGSDIPFFINGGIQLCFGRGEILEKLDSNFDYGVILLKNPNVSVSTAETYSKYSNRFCYQYLTNGEMIENIRNNLRDNGLNNLNFDKQHLTIKNDLQLVVENDNDSVKEALYLLSKLENCLTFSMSGSGPTCFAIFKDIETAKKELNANSKLFEDKGYDAWVCTFFEKGITFI.

Lysine 16 is an active-site residue. 100–110 (PIGAGLAGGSS) contributes to the ATP binding site. The active site involves aspartate 142.

It belongs to the GHMP kinase family. IspE subfamily.

The enzyme catalyses 4-CDP-2-C-methyl-D-erythritol + ATP = 4-CDP-2-C-methyl-D-erythritol 2-phosphate + ADP + H(+). The protein operates within isoprenoid biosynthesis; isopentenyl diphosphate biosynthesis via DXP pathway; isopentenyl diphosphate from 1-deoxy-D-xylulose 5-phosphate: step 3/6. Functionally, catalyzes the phosphorylation of the position 2 hydroxy group of 4-diphosphocytidyl-2C-methyl-D-erythritol. The protein is 4-diphosphocytidyl-2-C-methyl-D-erythritol kinase of Prochlorococcus marinus (strain MIT 9215).